The following is a 137-amino-acid chain: MKPSERRKARHCATQAIYQWQMTKANVGDIEEQFKIDQDTKGVDLNYFRDLLFGVALHCNELDKVFAPFLSRPLEEVDMVDKAILRLATYELTRRDDVPPRVAINEAIELAKSFAADDSHKFVNGVLDKVIKSLNKR.

It belongs to the NusB family.

In terms of biological role, involved in transcription antitermination. Required for transcription of ribosomal RNA (rRNA) genes. Binds specifically to the boxA antiterminator sequence of the ribosomal RNA (rrn) operons. The protein is Transcription antitermination protein NusB of Aeromonas hydrophila subsp. hydrophila (strain ATCC 7966 / DSM 30187 / BCRC 13018 / CCUG 14551 / JCM 1027 / KCTC 2358 / NCIMB 9240 / NCTC 8049).